A 330-amino-acid chain; its full sequence is Aspartate--ammonia ligase (330 aa).

Belongs to the class-II aminoacyl-tRNA synthetase family. AsnA subfamily.

The protein localises to the cytoplasm. It carries out the reaction L-aspartate + NH4(+) + ATP = L-asparagine + AMP + diphosphate + H(+). The protein operates within amino-acid biosynthesis; L-asparagine biosynthesis; L-asparagine from L-aspartate (ammonia route): step 1/1. The chain is Aspartate--ammonia ligase from Cronobacter sakazakii (strain ATCC BAA-894) (Enterobacter sakazakii).